Consider the following 182-residue polypeptide: Flagellar transcriptional regulator FlhC (182 aa).

Zn(2+)-binding residues include Cys-138, Cys-141, Cys-158, and Cys-161.

Belongs to the FlhC family. In terms of assembly, heterohexamer composed of two FlhC and four FlhD subunits. Each FlhC binds a FlhD dimer, forming a heterotrimer, and a hexamer assembles by dimerization of two heterotrimers. Zn(2+) is required as a cofactor.

Its subcellular location is the cytoplasm. Functionally, functions in complex with FlhD as a master transcriptional regulator that regulates transcription of several flagellar and non-flagellar operons by binding to their promoter region. Activates expression of class 2 flagellar genes, including fliA, which is a flagellum-specific sigma factor that turns on the class 3 genes. Also regulates genes whose products function in a variety of physiological pathways. This Gallionella capsiferriformans (strain ES-2) (Gallionella ferruginea capsiferriformans (strain ES-2)) protein is Flagellar transcriptional regulator FlhC.